Here is a 116-residue protein sequence, read N- to C-terminus: NADPH-dependent 7-cyano-7-deazaguanine reductase (116 aa).

The active-site Thioimide intermediate is the Cys-31. The Proton donor role is filled by Asp-38. Substrate-binding positions include 53 to 55 and 72 to 73; these read IEL and YE.

This sequence belongs to the GTP cyclohydrolase I family. QueF type 1 subfamily.

Its subcellular location is the cytoplasm. The catalysed reaction is 7-aminomethyl-7-carbaguanine + 2 NADP(+) = 7-cyano-7-deazaguanine + 2 NADPH + 3 H(+). The protein operates within tRNA modification; tRNA-queuosine biosynthesis. Catalyzes the NADPH-dependent reduction of 7-cyano-7-deazaguanine (preQ0) to 7-aminomethyl-7-deazaguanine (preQ1). In Chlorobaculum parvum (strain DSM 263 / NCIMB 8327) (Chlorobium vibrioforme subsp. thiosulfatophilum), this protein is NADPH-dependent 7-cyano-7-deazaguanine reductase.